The chain runs to 645 residues: MTDLLLDGSEADNAQTVLNAARIELLSPRLANQIAAGEVVERPASVIKELLENSLDSGARRIDIDVEQAGIKLLKVRDDGGGISSDDLPLALARHATSKIRDLEDLERVMSLGFRGEALASISSVARLTLTSRTRDADQAWQVETEGRDMDARVQPAAHPVGTSVEVRDLFFNTPARRKFLKAEKTEFDHLHEVIKRMALARFDVAFHLRHNGKTVLSLHEAHDDTARARRVSAICGPGFLEQALPIEIERNGLHLWGWVGLPTFSRSQADLQYFFVNGRAVRDKLVAHAVRQAYRDVLFNGRHPTFVLFFEVDPAAVDVNVHPTKHEVRFRDGRMVHDFLYGTLHRALGDVRPENQLGGSVPAAAEPRPTGPDAGEFGPQGEMRLANNVLEQPQGEPFARPAGGGSGSGYQYSPRPTTGVPVAEAQSAYREFFAPLPGTTPSALPESPSDIPPLGYALAQLKGIYILAENAHGLVLVDMHAAHERIMYERLKIAMANEGLSGQPLLVPESIAVSQREADCAEEHITTFQRLGFELQRLGPETLAIRQIPALLKQAEANRLVSDVLADLMEYGTSDRVQAHMNELLGTMACHGAIRANRRLAIPEMNGLLRDMENTERSGQCNHGRPTWTQMGLSDLDKLFLRGQ.

Disordered regions lie at residues 353–381 (RPEN…FGPQ) and 395–420 (QGEP…PTTG).

This sequence belongs to the DNA mismatch repair MutL/HexB family.

Its function is as follows. This protein is involved in the repair of mismatches in DNA. It is required for dam-dependent methyl-directed DNA mismatch repair. May act as a 'molecular matchmaker', a protein that promotes the formation of a stable complex between two or more DNA-binding proteins in an ATP-dependent manner without itself being part of a final effector complex. This Pseudomonas syringae pv. tomato (strain ATCC BAA-871 / DC3000) protein is DNA mismatch repair protein MutL.